A 292-amino-acid polypeptide reads, in one-letter code: Probable xyloglucan endotransglucosylase/hydrolase protein 6 (292 aa).

A signal peptide spans 1 to 30; sequence MAKIYSPSFPGTLCLCIFTLLTLMFIRVSA. The GH16 domain occupies 31–224; that stretch reads RPATFVEDFK…WSKAPFYAYY (194 aa). The active-site Nucleophile is the E110. The active-site Proton donor is the E114. E114 serves as a coordination point for xyloglucan. Residue N118 is glycosylated (N-linked (GlcNAc...) asparagine). Xyloglucan is bound by residues 127 to 129, 137 to 139, 203 to 204, and G208; these read QTN, DRE, and DW. Cystine bridges form between C232/C240 and C277/C290. Position 282 (R282) interacts with xyloglucan.

The protein belongs to the glycosyl hydrolase 16 family. XTH group 1 subfamily. Post-translationally, contains at least one intrachain disulfide bond essential for its enzymatic activity.

It is found in the secreted. It localises to the cell wall. Its subcellular location is the extracellular space. The protein localises to the apoplast. The catalysed reaction is breaks a beta-(1-&gt;4) bond in the backbone of a xyloglucan and transfers the xyloglucanyl segment on to O-4 of the non-reducing terminal glucose residue of an acceptor, which can be a xyloglucan or an oligosaccharide of xyloglucan.. Its function is as follows. Catalyzes xyloglucan endohydrolysis (XEH) and/or endotransglycosylation (XET). Cleaves and religates xyloglucan polymers, an essential constituent of the primary cell wall, and thereby participates in cell wall construction of growing tissues. The polypeptide is Probable xyloglucan endotransglucosylase/hydrolase protein 6 (XTH6) (Arabidopsis thaliana (Mouse-ear cress)).